The sequence spans 799 residues: Potassium transporter 21 (799 aa).

Over methionine 1–serine 56 the chain is Cytoplasmic. A helical membrane pass occupies residues leucine 57–tyrosine 77. At serine 78–glycine 93 the chain is on the extracellular side. The chain crosses the membrane as a helical span at residues valine 94–alanine 114. Residues leucine 115–lysine 181 lie on the Cytoplasmic side of the membrane. A helical transmembrane segment spans residues isoleucine 182–threonine 202. The Extracellular portion of the chain corresponds to proline 203–proline 219. The chain crosses the membrane as a helical span at residues histidine 220–isoleucine 240. Topologically, residues glutamine 241–serine 251 are cytoplasmic. Residues phenylalanine 252 to isoleucine 272 form a helical membrane-spanning segment. Residues lysine 273–serine 301 are Extracellular-facing. Residues leucine 302–phenylalanine 322 traverse the membrane as a helical segment. Residues serine 323 to glutamine 328 are Cytoplasmic-facing. The chain crosses the membrane as a helical span at residues leucine 329–phenylalanine 349. Residues leucine 350–phenylalanine 362 lie on the Extracellular side of the membrane. A helical transmembrane segment spans residues alanine 363–isoleucine 383. Topologically, residues glycine 384–glutamine 420 are cytoplasmic. A helical membrane pass occupies residues leucine 421 to phenylalanine 441. Residues lysine 442–glutamate 452 are Extracellular-facing. A helical transmembrane segment spans residues isoleucine 453–valine 473. The Cytoplasmic portion of the chain corresponds to tryptophan 474–lysine 475. A helical membrane pass occupies residues isoleucine 476 to leucine 496. Topologically, residues serine 497–tyrosine 508 are extracellular. A helical membrane pass occupies residues valine 509 to valine 529. The Cytoplasmic portion of the chain corresponds to lysine 530 to isoleucine 799.

It belongs to the HAK/KUP transporter (TC 2.A.72.3) family.

It localises to the membrane. In terms of biological role, high-affinity potassium transporter. The chain is Potassium transporter 21 (HAK21) from Oryza sativa subsp. japonica (Rice).